The following is a 334-amino-acid chain: Protein-glutamate methylesterase/protein-glutamine glutaminase 2 (334 aa).

Residues 2–120 form the Response regulatory domain; it reads NIGIVNDLPL…GAAGDTTKLL (119 aa). Asp-53 carries the post-translational modification 4-aspartylphosphate. One can recognise a CheB-type methylesterase domain in the interval 134 to 334; it reads PGSSRLAGAA…AGELAALARI (201 aa). Catalysis depends on residues Ser-157, His-184, and Asp-277.

Belongs to the CheB family. In terms of processing, phosphorylated by CheA. Phosphorylation of the N-terminal regulatory domain activates the methylesterase activity.

It localises to the cytoplasm. It carries out the reaction [protein]-L-glutamate 5-O-methyl ester + H2O = L-glutamyl-[protein] + methanol + H(+). It catalyses the reaction L-glutaminyl-[protein] + H2O = L-glutamyl-[protein] + NH4(+). Its function is as follows. Involved in chemotaxis. Part of a chemotaxis signal transduction system that modulates chemotaxis in response to various stimuli. Catalyzes the demethylation of specific methylglutamate residues introduced into the chemoreceptors (methyl-accepting chemotaxis proteins or MCP) by CheR. Also mediates the irreversible deamidation of specific glutamine residues to glutamic acid. The protein is Protein-glutamate methylesterase/protein-glutamine glutaminase 2 of Burkholderia orbicola (strain AU 1054).